A 201-amino-acid chain; its full sequence is Xanthine phosphoribosyltransferase (201 aa).

Residues Leu-20 and Asn-27 each contribute to the xanthine site. Residue 129–133 coordinates 5-phospho-alpha-D-ribose 1-diphosphate; that stretch reads ANGQA. Lys-157 contributes to the xanthine binding site.

Belongs to the purine/pyrimidine phosphoribosyltransferase family. Xpt subfamily. In terms of assembly, homodimer.

It is found in the cytoplasm. The catalysed reaction is XMP + diphosphate = xanthine + 5-phospho-alpha-D-ribose 1-diphosphate. It participates in purine metabolism; XMP biosynthesis via salvage pathway; XMP from xanthine: step 1/1. Its function is as follows. Converts the preformed base xanthine, a product of nucleic acid breakdown, to xanthosine 5'-monophosphate (XMP), so it can be reused for RNA or DNA synthesis. The polypeptide is Xanthine phosphoribosyltransferase (Shouchella clausii (strain KSM-K16) (Alkalihalobacillus clausii)).